We begin with the raw amino-acid sequence, 874 residues long: Valine--tRNA ligase (874 aa).

The disordered stretch occupies residues 1 to 22; sequence MTENSQQPQPAPSTELPTQYTP. The 'HIGH' region motif lies at 57–67; sequence PNVTGSLHLGH. A 'KMSKS' region motif is present at residues 531–535; that stretch reads KMSKS. Lys-534 serves as a coordination point for ATP. The stretch at 805 to 871 forms a coiled coil; that stretch reads VIDFAAERKR…TRITAQLEKL (67 aa).

The protein belongs to the class-I aminoacyl-tRNA synthetase family. ValS type 1 subfamily. In terms of assembly, monomer.

The protein resides in the cytoplasm. It catalyses the reaction tRNA(Val) + L-valine + ATP = L-valyl-tRNA(Val) + AMP + diphosphate. Its function is as follows. Catalyzes the attachment of valine to tRNA(Val). As ValRS can inadvertently accommodate and process structurally similar amino acids such as threonine, to avoid such errors, it has a 'posttransfer' editing activity that hydrolyzes mischarged Thr-tRNA(Val) in a tRNA-dependent manner. This is Valine--tRNA ligase from Streptomyces coelicolor (strain ATCC BAA-471 / A3(2) / M145).